We begin with the raw amino-acid sequence, 384 residues long: 8-amino-7-oxononanoate synthase (384 aa).

Residue arginine 21 participates in substrate binding. A pyridoxal 5'-phosphate-binding site is contributed by 108–109 (GF). Position 133 (histidine 133) interacts with substrate. Serine 179, histidine 207, and threonine 233 together coordinate pyridoxal 5'-phosphate. Lysine 236 carries the post-translational modification N6-(pyridoxal phosphate)lysine. Threonine 352 is a substrate binding site.

This sequence belongs to the class-II pyridoxal-phosphate-dependent aminotransferase family. BioF subfamily. As to quaternary structure, homodimer. Pyridoxal 5'-phosphate is required as a cofactor.

The enzyme catalyses 6-carboxyhexanoyl-[ACP] + L-alanine + H(+) = (8S)-8-amino-7-oxononanoate + holo-[ACP] + CO2. Its pathway is cofactor biosynthesis; biotin biosynthesis. In terms of biological role, catalyzes the decarboxylative condensation of pimeloyl-[acyl-carrier protein] and L-alanine to produce 8-amino-7-oxononanoate (AON), [acyl-carrier protein], and carbon dioxide. The protein is 8-amino-7-oxononanoate synthase of Citrobacter koseri (strain ATCC BAA-895 / CDC 4225-83 / SGSC4696).